Reading from the N-terminus, the 2772-residue chain is MDYIRPLRVFSFPHVNNTLEYVRYNKANGDVGAFLTTMKFIGNVKLSDFTPRCAAMIYIGKLTKGVKRTFVPPPVKGFARQYAVVSGSVSALRGDGKKVLMEARTSTSATSDVSDFDVVFEAVSNALLVVHYHRVVPYAPVKREQPKPAVKQDEQKPKRQASHWAVKPTAVGVHVPLPKKQEALEPAQSVPQQSLEEKAALTFGLFFSKGGGDESDAVILRKGKLFNRALNVPIDVKNTFVWAKIWDEASRRRGYFYVKDRAVKFFPIVRGRATIEDFIVNTAPGCDVALPRIELWSMRERAFVCTTKGWCWFNNERLRGEIYRRRCFSSSFSIGFLMHLGFRSLKVIRFAGTNILHMPSLNEERTFGWKGGDVYLPNVPKTAIVAGDRTRLGGEILASVANALNQEEVYSSVVSSITNRLVLRDQSALLSHLDTKLCDMFSQRDAMIREKPSHRCDVFLKPREREKLRELFPELSIQFSDSVRSSHPFANAMRSCFNGIFSRRCGNVCFFDIGGSFTYHVKAGHVNCHVCNPVLDVKDVKRRINEILFLSTAGGDSYVSSDLLTEAASKSVSYCSRESQNCDSRADAGFMVDVYDISPQQVAEAMDKKGALVFDIALMFPVELLYGNGEVYLEELDTLVKREGDYLAYNVGQCGEMYEHSFSNVSGFFTFSYVRTSSGNVFKLEYEGYRCGYHHLTMCRAQKSPGTEVTYRSLVPSFVGKSLVFIPVVAGSSVSFKTIVLDSDFVDRIYSYALNTIGTFENRTFEYAVGAVRSQKTHVITGSRVVHSKVDISPDDMWGLVVAVMAQAIKDRAKSIRSYNFIKASEGSLAGVFKLFFQTVGDCFSNAVSVYAKAMVHDNFNVLETLMSMPRAFIRKVPGSVVVTICTSGASDRLELRGAFDISKETFGRKLKNSRLRVFSRAIVEDSIKVMKAMKTEDGKPLPITEDSVYAFIMGNVSNVHCTRAGLLGGSKATVVSSVSKGLVARGAATKAFSGITSFFSTGSLFYDRGLTEDERLDALVRTENAINSPVGILETSRVAVSKVVAGTKEFWSEVSLNDFTTFVLRNKVLIGIFVASLGAAPIAWKYRRGIAANARRYAGSSYETLSSLSSQAAGGLRGLTSSTVSGGSLVVRRGFSSAVTVTRATVAKRQVPLALLSFSTSYAISGCSMLGIWAHALPRHLMFFFGLGTLLGARASANTWKFGGFSNNWCAVPEVVWRGKSVSSLLLPITLGVSLIIRGLLNDTIPQLAYVPPVEGRNVYDETLRYYRDFDYDEGAGPSGTQHEAVPGDDNDGSTSSVSSYDVVTNVRDVGISTNGEVTGEEETHSPRSVQYTYVEEEVAPSAAVAERQGDPSGSGTADAMAFVESVKKGVDDVFHQQSSGETAREVEVDGKGLLPESVVGEAPTQERGRAADGNTAQTAVNEGDREPVQSSLVSSPQADIPKVTQSEVHAQKEVKQEVPLATVSGATPIVDEKPAPSVTTRGVKIIDKGKAVAHVAEKKQVQVEQPKQRSLTINEGKAGKQLCMFRTCSCGVQLDVYNEATIATRFSNAFTFVDNLKGRSAVFFSKLGEGYTYNGGSHVSSGWPRALEDILTAIKYPSVFDHCLVQKYKMGGGVPFHADDEECYPSDNPILTVNLVGKANFSTKCRKGGKVMVINVASGDYFLMPCGFQRTHLHSVNSIDEGRISLTFRATRRVFGVGRMLQLAGGVSDEKSPGVPNQQPQSQGATRTITPKSGGKALSEGSGREVKGRSTYSIWCEQDYVRKCEWLRADNPVMALEPDYTPMTFEVVKTGTSEDAVVEYLKYLAIGIERTYRALLMARNIAVTTAEGVLKVPNQVYESLPGFHVYKSGTDLIFHSTQDGLRVRDLPYVLIAEKGIFTKGKDVDAVVALGDNLFVCDDILVFHDAINLIGALKVARCGMVGESFKSFEYKCYNAPPGGGKTTTLVDEFVKSPNSTATITANVGSSEDINMAVKKRDPNLEGLNSATTVNSRVVNFIVRGMYKRVLVDEVHMMHQGLLQLGVFATGASEGLFFGDINQIPFINREKVFRMDCAVFVPKKESVVYTSKSYRCPLDVCYLLSSMTVRGTEKCYPEKVVSGKDKPVVRSLSKRPIGTTDDVAEINADVYLCMTQLEKSDMKRSLKGKGKETPVMTVHEAQGKTFSDVVLFRTKKADDSLFTKQPHILVGLSRHTRSLVYAALSSKLDDKVGTYISDASPQSVSDALLTRSPRLVAFEVYERMNFGPTFEGELVRKIPTSHFVAVNGFLEDLLDGCPAFDYDFFEDDFETSDQSFLIEDVRISESFSHFTSKIEDRFYSFIRSSVGLPKRNTLKCNLVTFENRNFNADRGCNVGCDDSVAHELKEIFFEEVVNKARLAEVTESHLSSNTMLLSDWLDKRAPNAYKSLKRALGSFVFHPSMLTSYTLMVKADVKPKLDNTPLSKYVTGQNIVYHDRCVTALFSCIFTACVERLKYVVDERWLFYHGMDTAELAAALRNNLGDIRQYYTYELDISKYDKSQSALMKQVEELILLTLGVDREVLSTFFCGEYDSVVRTMTKELVLSVGSQRRSGGANTWLGNSLVLCTLLSVVLRGLDYSYIVVSGDDSLIFSRQPLDIDTSVLSDNFGFDVKIFNQAAPYFCSKFLVQVEDSLFFVPDPLKLFVKFGASKTSDIDLLHEIFQSFVDLSKGFNREDVIQELAKLVTRKYKHSGWTYSALCVLHVLSANFSQFCRLYYHNSVNLDVRPIQRTESLSLLALKARILRWKASRFAFSIKRG.

Basic and acidic residues predominate over residues 143 to 157 (REQPKPAVKQDEQKP). The disordered stretch occupies residues 143–163 (REQPKPAVKQDEQKPKRQASH). Residues Cys311 and His357 each act as for leader protease activity in the active site. An Alphavirus-like MT domain is found at 478–669 (QFSDSVRSSH…HSFSNVSGFF (192 aa)). Disordered stretches follow at residues 1277–1301 (AGPS…SVSS) and 1400–1442 (VVGE…QADI). The span at 1430-1442 (VQSSLVSSPQADI) shows a compositional bias: polar residues. The Fe2OG dioxygenase domain maps to 1601–1694 (VFDHCLVQKY…RISLTFRATR (94 aa)). Residues His1619, Asp1621, and His1676 each coordinate Fe cation. Position 1685 (Arg1685) interacts with 2-oxoglutarate. Positions 1708-1746 (GVSDEKSPGVPNQQPQSQGATRTITPKSGGKALSEGSGR) are disordered. Polar residues predominate over residues 1717 to 1733 (VPNQQPQSQGATRTITP). One can recognise a (+)RNA virus helicase ATP-binding domain in the interval 1902-2066 (LVFHDAINLI…VPKKESVVYT (165 aa)). Positions 2067 to 2233 (SKSYRCPLDV…LLTRSPRLVA (167 aa)) constitute a (+)RNA virus helicase C-terminal domain. In terms of domain architecture, RdRp catalytic spans 2502 to 2615 (YYTYELDISK…FSRQPLDIDT (114 aa)).

Belongs to the ssRNA positive-strand viruses RNA-directed RNA polymerase family. Fe(2+) serves as cofactor.

It carries out the reaction RNA(n) + a ribonucleoside 5'-triphosphate = RNA(n+1) + diphosphate. The enzyme catalyses ATP + H2O = ADP + phosphate + H(+). Functionally, RNA-dependent RNA polymerase replicates the viral genome. The protein is Replicase polyprotein 1ab of Grapevine leafroll-associated virus 3 (isolate United States/NY1) (GLRaV-3).